A 164-amino-acid polypeptide reads, in one-letter code: Thiol peroxidase (164 aa).

The 147-residue stretch at leucine 16–isoleucine 162 folds into the Thioredoxin domain. Catalysis depends on cysteine 58, which acts as the Cysteine sulfenic acid (-SOH) intermediate. Cysteine 58 and cysteine 92 are oxidised to a cystine.

Belongs to the peroxiredoxin family. Tpx subfamily. In terms of assembly, homodimer.

It catalyses the reaction a hydroperoxide + [thioredoxin]-dithiol = an alcohol + [thioredoxin]-disulfide + H2O. Thiol-specific peroxidase that catalyzes the reduction of hydrogen peroxide and organic hydroperoxides to water and alcohols, respectively. Plays a role in cell protection against oxidative stress by detoxifying peroxides. The polypeptide is Thiol peroxidase (Streptococcus agalactiae serotype V (strain ATCC BAA-611 / 2603 V/R)).